Reading from the N-terminus, the 336-residue chain is Melanoma-associated antigen B17 (336 aa).

A compositionally biased stretch (basic residues) spans 1-17 (MPRGQASKRRAREKRRQ). A disordered region spans residues 1–108 (MPRGQASKRR…SSSESTGRDL (108 aa)). Low complexity-rich tracts occupy residues 39–54 (PSSS…QSFP) and 62–80 (SQRA…LTSS). Residues 90–103 (ESPNSFHGPSSSES) show a composition bias toward polar residues. The 228-residue stretch at 109–336 (LNTKTGELVQ…RARASRSFQP (228 aa)) folds into the MAGE domain.

The chain is Melanoma-associated antigen B17 (MAGEB17) from Homo sapiens (Human).